Reading from the N-terminus, the 687-residue chain is Methionine--tRNA ligase (687 aa).

Residues 14 to 24 (PYANGYIHLGH) carry the 'HIGH' region motif. 4 residues coordinate Zn(2+): Cys145, Cys148, Cys158, and Cys161. The 'KMSKS' region signature appears at 329 to 333 (KMSKS). Lys332 provides a ligand contact to ATP. Residues 585–687 (DFDKVDLRIG…DGAQVGQRVK (103 aa)) enclose the tRNA-binding domain.

Belongs to the class-I aminoacyl-tRNA synthetase family. MetG type 1 subfamily. In terms of assembly, homodimer. Requires Zn(2+) as cofactor.

It localises to the cytoplasm. The enzyme catalyses tRNA(Met) + L-methionine + ATP = L-methionyl-tRNA(Met) + AMP + diphosphate. Functionally, is required not only for elongation of protein synthesis but also for the initiation of all mRNA translation through initiator tRNA(fMet) aminoacylation. The sequence is that of Methionine--tRNA ligase from Bdellovibrio bacteriovorus (strain ATCC 15356 / DSM 50701 / NCIMB 9529 / HD100).